Reading from the N-terminus, the 500-residue chain is NAD(P)H-quinone oxidoreductase chain 4, chloroplastic (500 aa).

14 helical membrane-spanning segments follow: residues 4-24 (FPWL…MLFL), 35-55 (YTIC…CYNF), 87-107 (IGTI…AFPV), 113-130 (LFHF…GSFS), 134-154 (LLLF…LLSM), 167-187 (FILY…GISL), 211-231 (ILFY…IPLH), 242-262 (HYST…YGLV), 272-292 (AHSM…IYAA), 305-325 (IAYS…SITD), 330-350 (GAIL…FLAG), 386-406 (LALP…GIIT), 416-436 (ILII…LLSM), and 462-482 (LFLS…PDFV).

It belongs to the complex I subunit 4 family.

Its subcellular location is the plastid. The protein resides in the chloroplast thylakoid membrane. The catalysed reaction is a plastoquinone + NADH + (n+1) H(+)(in) = a plastoquinol + NAD(+) + n H(+)(out). It carries out the reaction a plastoquinone + NADPH + (n+1) H(+)(in) = a plastoquinol + NADP(+) + n H(+)(out). The chain is NAD(P)H-quinone oxidoreductase chain 4, chloroplastic from Nasturtium officinale (Watercress).